A 350-amino-acid chain; its full sequence is Methylthioribose-1-phosphate isomerase (350 aa).

Residues 47-49, arginine 90, and glutamine 197 contribute to the substrate site; that span reads RGA. Residue aspartate 238 is the Proton donor of the active site. Substrate is bound at residue 248–249; sequence NK.

Belongs to the eIF-2B alpha/beta/delta subunits family. MtnA subfamily.

The catalysed reaction is 5-(methylsulfanyl)-alpha-D-ribose 1-phosphate = 5-(methylsulfanyl)-D-ribulose 1-phosphate. Its pathway is amino-acid biosynthesis; L-methionine biosynthesis via salvage pathway; L-methionine from S-methyl-5-thio-alpha-D-ribose 1-phosphate: step 1/6. Catalyzes the interconversion of methylthioribose-1-phosphate (MTR-1-P) into methylthioribulose-1-phosphate (MTRu-1-P). This is Methylthioribose-1-phosphate isomerase from Nitratidesulfovibrio vulgaris (strain DP4) (Desulfovibrio vulgaris).